Consider the following 290-residue polypeptide: Phosphatidylglycerol--prolipoprotein diacylglyceryl transferase (290 aa).

7 helical membrane-spanning segments follow: residues 21 to 41, 60 to 80, 96 to 116, 124 to 144, 199 to 219, 226 to 246, and 260 to 280; these read VSLH…MWLA, LLYA…VLFY, WDGG…MLWF, FFQV…AGRL, SQLY…NVFI, GSVS…VECF, and ISMG…MMIW. Residue Arg-143 participates in a 1,2-diacyl-sn-glycero-3-phospho-(1'-sn-glycerol) binding.

It belongs to the Lgt family.

It localises to the cell inner membrane. It catalyses the reaction L-cysteinyl-[prolipoprotein] + a 1,2-diacyl-sn-glycero-3-phospho-(1'-sn-glycerol) = an S-1,2-diacyl-sn-glyceryl-L-cysteinyl-[prolipoprotein] + sn-glycerol 1-phosphate + H(+). Its pathway is protein modification; lipoprotein biosynthesis (diacylglyceryl transfer). Its function is as follows. Catalyzes the transfer of the diacylglyceryl group from phosphatidylglycerol to the sulfhydryl group of the N-terminal cysteine of a prolipoprotein, the first step in the formation of mature lipoproteins. The protein is Phosphatidylglycerol--prolipoprotein diacylglyceryl transferase of Yersinia pseudotuberculosis serotype O:1b (strain IP 31758).